A 473-amino-acid chain; its full sequence is Histone-lysine N-methyltransferase ATXR2 (473 aa).

Positions 33 to 441 constitute an SET domain; the sequence is KLITSRRCNG…KNEEVTISYI (409 aa). The MYND-type; degenerate zinc-finger motif lies at 134 to 203; it reads EEQCGGSSSS…DWESSHSLLC (70 aa). Cys176, Cys180, His199, and Cys203 together coordinate Zn(2+). Tyr440 is an S-adenosyl-L-methionine binding site.

Belongs to the class V-like SAM-binding methyltransferase superfamily. Histone-lysine methyltransferase family. TRX/MLL subfamily. As to quaternary structure, interacts with JMJ30. Binds to ARF7 and ARF19 in the nucleus.

It is found in the nucleus. It carries out the reaction L-lysyl-[histone] + S-adenosyl-L-methionine = N(6)-methyl-L-lysyl-[histone] + S-adenosyl-L-homocysteine + H(+). Histone methyltransferase that methylates 'Lys-36' (H3K36me) of histone H3 to produce H3K36me3. Promotes early stages of cellular dedifferentiation through H3K36me3-dependent, and to a lesser degree H3K4me3-dependent, activation of Lateral organ Boundaries-Domain (LBD) (e.g. LBD16 and LBD29) genes. Positive regulator of root organogenesis including lateral root formation as well as adventitious root formation from wounded leaf tissues. Recruited by JMJ30/ARF (e.g. ARF7 and ARF19) complexes to promote the deposition of H3K36me3 and, to a lower extent, H3K4me3 at LBD genes promoters, thus ensuring their stable activation during callus formation on callus-inducing medium (CIM). The sequence is that of Histone-lysine N-methyltransferase ATXR2 from Arabidopsis thaliana (Mouse-ear cress).